Here is a 53-residue protein sequence, read N- to C-terminus: Metallocarboxypeptidase inhibitor b (53 aa).

3 disulfide bridges follow: cysteine 9-cysteine 23, cysteine 15-cysteine 51, and cysteine 27-cysteine 38. A Zn(2+)-binding site is contributed by alanine 53.

In terms of biological role, metallocarboxypeptidase inhibitor. Has an inhibitory effect on bovine CPA1 and porcine CPB1. Does not inhibit D.melanogaster svr (carboxypeptidase D). Shows no activity against serine proteases subtilisin or bovine trypsin, cysteine protease papain, and aspartyl protease porcine pepsin. The polypeptide is Metallocarboxypeptidase inhibitor b (Nerita versicolor (Four-tooth nerite)).